A 129-amino-acid chain; its full sequence is Glycine cleavage system H protein (129 aa).

One can recognise a Lipoyl-binding domain in the interval 24-106 (IATIGITEFA…YGEGWFLKVR (83 aa)). Lysine 65 carries the post-translational modification N6-lipoyllysine.

The protein belongs to the GcvH family. As to quaternary structure, the glycine cleavage system is composed of four proteins: P, T, L and H. Requires (R)-lipoate as cofactor.

The glycine cleavage system catalyzes the degradation of glycine. The H protein shuttles the methylamine group of glycine from the P protein to the T protein. The protein is Glycine cleavage system H protein of Nostoc punctiforme (strain ATCC 29133 / PCC 73102).